The primary structure comprises 270 residues: Aliphatic sulfonates import ATP-binding protein SsuB 3 (270 aa).

One can recognise an ABC transporter domain in the interval 17–238 (LAVRKLKKAF…VRGSHRLAAL (222 aa)). ATP is bound at residue 49-56 (GRSGCGKS).

This sequence belongs to the ABC transporter superfamily. Aliphatic sulfonates importer (TC 3.A.1.17.2) family. In terms of assembly, the complex is composed of two ATP-binding proteins (SsuB), two transmembrane proteins (SsuC) and a solute-binding protein (SsuA).

It localises to the cell inner membrane. It carries out the reaction ATP + H2O + aliphatic sulfonate-[sulfonate-binding protein]Side 1 = ADP + phosphate + aliphatic sulfonateSide 2 + [sulfonate-binding protein]Side 1.. Its function is as follows. Part of the ABC transporter complex SsuABC involved in aliphatic sulfonates import. Responsible for energy coupling to the transport system. This chain is Aliphatic sulfonates import ATP-binding protein SsuB 3, found in Pseudomonas syringae pv. syringae (strain B728a).